We begin with the raw amino-acid sequence, 282 residues long: ATP phosphoribosyltransferase (282 aa).

It belongs to the ATP phosphoribosyltransferase family. Long subfamily. Requires Mg(2+) as cofactor.

The protein resides in the cytoplasm. The catalysed reaction is 1-(5-phospho-beta-D-ribosyl)-ATP + diphosphate = 5-phospho-alpha-D-ribose 1-diphosphate + ATP. It participates in amino-acid biosynthesis; L-histidine biosynthesis; L-histidine from 5-phospho-alpha-D-ribose 1-diphosphate: step 1/9. With respect to regulation, feedback inhibited by histidine. Functionally, catalyzes the condensation of ATP and 5-phosphoribose 1-diphosphate to form N'-(5'-phosphoribosyl)-ATP (PR-ATP). Has a crucial role in the pathway because the rate of histidine biosynthesis seems to be controlled primarily by regulation of HisG enzymatic activity. The polypeptide is ATP phosphoribosyltransferase (Micrococcus luteus (strain ATCC 4698 / DSM 20030 / JCM 1464 / CCM 169 / CCUG 5858 / IAM 1056 / NBRC 3333 / NCIMB 9278 / NCTC 2665 / VKM Ac-2230) (Micrococcus lysodeikticus)).